A 238-amino-acid polypeptide reads, in one-letter code: ATP synthase subunit a (238 aa).

The next 5 helical transmembrane spans lie at 16-36 (LIWL…TVLF), 79-99 (GLFM…FFPV), 103-123 (FVFG…SSLL), 129-149 (GLMS…MVVV), and 209-229 (VFGA…CVLL).

This sequence belongs to the ATPase A chain family. F-type ATPases have 2 components, CF(1) - the catalytic core - and CF(0) - the membrane proton channel. CF(1) has five subunits: alpha(3), beta(3), gamma(1), delta(1), epsilon(1). CF(0) has three main subunits: a, b and c.

It is found in the mitochondrion inner membrane. Its function is as follows. Mitochondrial membrane ATP synthase (F(1)F(0) ATP synthase or Complex V) produces ATP from ADP in the presence of a proton gradient across the membrane which is generated by electron transport complexes of the respiratory chain. F-type ATPases consist of two structural domains, F(1) - containing the extramembraneous catalytic core and F(0) - containing the membrane proton channel, linked together by a central stalk and a peripheral stalk. During catalysis, ATP synthesis in the catalytic domain of F(1) is coupled via a rotary mechanism of the central stalk subunits to proton translocation. Key component of the proton channel; it may play a direct role in the translocation of protons across the membrane. This is ATP synthase subunit a (ATP6) from Mytilus edulis (Blue mussel).